The chain runs to 3164 residues: ORFB polyprotein (3164 aa).

The Peptidase C8 domain occupies 271–418 (MARAIGLSHA…IWNDPNILVG (148 aa)). Residues C341 and H388 each act as for papain-like protease p48 activity in the active site. Transmembrane regions (helical) follow at residues 684–704 (LGFL…LLPF), 791–811 (IMIA…YVPY), 823–843 (YMLL…GYAC), 1166–1186 (AGLF…AAIM), 1215–1235 (FPIF…VSAY), and 1356–1376 (ALGF…LRPP). Positions 1419–1445 (IEEKPSDAGRSEPIPDNDKQEESDYDQ) are disordered. The RNA-directed RNA polymerase stretch occupies residues 1792–2207 (FYKSRKALKQ…AEDSADYRTW (416 aa)). 3 consecutive transmembrane segments (helical) span residues 2494–2514 (VRIY…MHWV), 2516–2536 (LFVQ…WSFW), and 2589–2609 (LGLV…EVLF). Residues 2650–2795 (ATKAIEHGHV…IPFLEPTLPK (146 aa)) enclose the Helicase ATP-binding domain. Residue 2663-2670 (AKTASGKS) participates in ATP binding. The DEFH box motif lies at 2750–2753 (DEFH).

This sequence in the C-terminal section; belongs to the DEAD box helicase family. Papain-like protease p48 is autocatalytically processed. The putative RNA-directed RNA polymerase/helicase is probably further processed.

The protein resides in the host membrane. The enzyme catalyses RNA(n) + a ribonucleoside 5'-triphosphate = RNA(n+1) + diphosphate. It catalyses the reaction ATP + H2O = ADP + phosphate + H(+). In terms of biological role, papain-like protease p48 is a cysteine protease of the peptidase family C8. This is ORFB polyprotein from Cryphonectria parasitica (Chestnut blight fungus).